The chain runs to 102 residues: Small ribosomal subunit protein uS10 (102 aa).

This sequence belongs to the universal ribosomal protein uS10 family. Part of the 30S ribosomal subunit.

Functionally, involved in the binding of tRNA to the ribosomes. The sequence is that of Small ribosomal subunit protein uS10 from Streptococcus thermophilus (strain CNRZ 1066).